We begin with the raw amino-acid sequence, 372 residues long: Formylglycine-generating enzyme (372 aa).

The signal sequence occupies residues 1-31 (MAAPAREPALRCCIRLARVFLLLVLACEVAG). A disulfide bond links cysteine 48 and cysteine 50. Residues 61 to 80 (SSAAAQRYSREANAPGLTSG) are disordered. Glutamate 128 serves as a coordination point for Ca(2+). Asparagine 139 carries an N-linked (GlcNAc...) asparagine glycan. Intrachain disulfides connect cysteine 216–cysteine 363 and cysteine 233–cysteine 344. Residues asparagine 257, isoleucine 258, aspartate 271, phenylalanine 273, asparagine 291, glycine 294, and glutamate 298 each coordinate Ca(2+). Cu(2+) is bound by residues cysteine 334 and cysteine 339. Positions 339–358 (CYRYRCAARSQNTPDSSASN) are interaction with sulfatases.

Belongs to the sulfatase-modifying factor family. As to quaternary structure, monomer, homodimer and heterodimer with SUMF2. Cu(2+) is required as a cofactor. In terms of processing, N-glycosylated. Contains high-mannose-type oligosaccharides.

It is found in the endoplasmic reticulum lumen. The enzyme catalyses L-cysteinyl-[sulfatase] + 2 a thiol + O2 = an organic disulfide + 3-oxo-L-alanyl-[sulfatase] + hydrogen sulfide + H2O + H(+). Its pathway is protein modification; sulfatase oxidation. Its function is as follows. Oxidase that catalyzes the conversion of cysteine to 3-oxoalanine on target proteins, using molecular oxygen and an unidentified reducing agent. 3-oxoalanine modification, which is also named formylglycine (fGly), occurs in the maturation of arylsulfatases and some alkaline phosphatases that use the hydrated form of 3-oxoalanine as a catalytic nucleophile. Known substrates include GALNS, ARSA, STS and ARSE. This is Formylglycine-generating enzyme from Mus musculus (Mouse).